We begin with the raw amino-acid sequence, 365 residues long: Prostaglandin E2 receptor EP3 subtype (365 aa).

Over 1–30 the chain is Extracellular; it reads MAGVWAPEHSVEAHSNQSSAADGCGSVSVA. Asn16 carries an N-linked (GlcNAc...) asparagine glycan. The helical transmembrane segment at 31 to 55 threads the bilayer; the sequence is FPITMMVTGFVGNALAMLLVVRSYR. Residues 56-68 lie on the Cytoplasmic side of the membrane; that stretch reads RRESKRKKSFLLC. A helical membrane pass occupies residues 69–89; it reads IGWLALTDLVGQLLTSPVVIL. The Extracellular portion of the chain corresponds to 90 to 108; sequence VYLSQRRWEQLDPSGRLCT. Cysteines 107 and 184 form a disulfide. A helical membrane pass occupies residues 109–130; that stretch reads FFGLTMTVFGLSSLLVASAMAV. Topologically, residues 131–151 are cytoplasmic; sequence ERALAIRAPHWYASHMKTRAT. The helical transmembrane segment at 152 to 173 threads the bilayer; the sequence is PVLLGVWLSVLAFALLPVLGVG. The Extracellular portion of the chain corresponds to 174 to 203; that stretch reads RYSVQWPGTWCFISTGPAGNETDSAREPGS. N-linked (GlcNAc...) asparagine glycosylation occurs at Asn193. A helical membrane pass occupies residues 204 to 229; it reads VAFASAFACLGLLALVVTFACNLATI. Topologically, residues 230-259 are cytoplasmic; it reads KALVSRCRAKAAASQSSAQWGRITTETAIQ. A helical transmembrane segment spans residues 260–283; sequence LMGIMCVLSVCWSPLLIMMLKMIF. Over 284–303 the chain is Extracellular; the sequence is NQMSVEQCKTQMGKEKECNS. The helical transmembrane segment at 304-325 threads the bilayer; that stretch reads FLIAVRLASLNQILDPWVYLLL. Residues 326-365 lie on the Cytoplasmic side of the membrane; that stretch reads RKILLRKFCQIRDHTNYASSSTSLPCPGSSVLMWSDQLER.

It belongs to the G-protein coupled receptor 1 family. In terms of assembly, interacts (via C-terminus) with MKLN1. As to quaternary structure, does not interact with MKLN1. As to expression, principally expressed in the tubules of the renal medulla. Specific expression is seen in medullary and cortical thick ascending limbs; lower levels are detected in cortical and inner medullary collecting ducts. Not detected significantly in the glomeruli. In the brain, expressed in all types of glial cells.

Its subcellular location is the cell membrane. Its function is as follows. Receptor for prostaglandin E2 (PGE2). Required for normal development of fever in response to pyrinogens, including IL1B, prostaglandin E2 and bacterial lipopolysaccharide (LPS). Required for normal potentiation of platelet aggregation by prostaglandin E2, and thus plays a role in the regulation of blood coagulation. Required for increased HCO3(-) secretion in the duodenum in response to mucosal acidification, and thereby contributes to the protection of the mucosa against acid-induced ulceration. Not required for normal kidney function, normal urine volume and osmolality. In terms of biological role, receptor for prostaglandin E2 (PGE2); ligand binding activates a signaling cascade via G(i) proteins that leads to the inhibition of adenylate cyclase. Functionally, receptor for prostaglandin E2 (PGE2); ligand binding can activate several distinct signaling cascades, resulting in activation or inhibition of adenylate cyclase. The polypeptide is Prostaglandin E2 receptor EP3 subtype (Ptger3) (Rattus norvegicus (Rat)).